The sequence spans 246 residues: MTHAYFFKFGYIGYMFTGYQRGNGVKSVEDTIIKALNLNSPSLIKTAARTDRGVSALSNVFYIETERRPQDIAGIINSKNEYVFVHSFAEVEHGRNPRYCDTKTYMYMLPGETECDSLMVTASGFLGFHDFSKFSKKDTRNPWRSIDEVKCHRESFGVVLEFSAKSFLWNQVRRMLAFILEFRGNKIDPFSVSNIYSHIAPPENLILKDIVYKDLSFKPLNNGLKRQRLMMEKSLISYIVLKNVLG.

Catalysis depends on D51, which acts as the Nucleophile. Residue Y105 participates in substrate binding.

The protein belongs to the tRNA pseudouridine synthase TruA family.

The catalysed reaction is uridine(38/39/40) in tRNA = pseudouridine(38/39/40) in tRNA. Formation of pseudouridine at positions 38, 39 and 40 in the anticodon stem and loop of transfer RNAs. The sequence is that of tRNA pseudouridine synthase A from Thermoplasma volcanium (strain ATCC 51530 / DSM 4299 / JCM 9571 / NBRC 15438 / GSS1).